The chain runs to 505 residues: Cobyric acid synthase (505 aa).

One can recognise a GATase cobBQ-type domain in the interval 260 to 453 (RIAVAAIYFP…FHGIIDEPEV (194 aa)). The active-site Nucleophile is Cys-341. His-445 is a catalytic residue.

It belongs to the CobB/CobQ family. CobQ subfamily.

Its pathway is cofactor biosynthesis; adenosylcobalamin biosynthesis. Catalyzes amidations at positions B, D, E, and G on adenosylcobyrinic A,C-diamide. NH(2) groups are provided by glutamine, and one molecule of ATP is hydrogenolyzed for each amidation. The protein is Cobyric acid synthase of Chlorobium phaeobacteroides (strain DSM 266 / SMG 266 / 2430).